The primary structure comprises 130 residues: Phosphoribosyl-AMP cyclohydrolase (130 aa).

A Mg(2+)-binding site is contributed by Asp77. Cys78 provides a ligand contact to Zn(2+). 2 residues coordinate Mg(2+): Asp79 and Asp81. Positions 95 and 102 each coordinate Zn(2+).

It belongs to the PRA-CH family. Homodimer. It depends on Mg(2+) as a cofactor. Zn(2+) is required as a cofactor.

Its subcellular location is the cytoplasm. The catalysed reaction is 1-(5-phospho-beta-D-ribosyl)-5'-AMP + H2O = 1-(5-phospho-beta-D-ribosyl)-5-[(5-phospho-beta-D-ribosylamino)methylideneamino]imidazole-4-carboxamide. It functions in the pathway amino-acid biosynthesis; L-histidine biosynthesis; L-histidine from 5-phospho-alpha-D-ribose 1-diphosphate: step 3/9. Its function is as follows. Catalyzes the hydrolysis of the adenine ring of phosphoribosyl-AMP. This Pseudomonas syringae pv. syringae (strain B728a) protein is Phosphoribosyl-AMP cyclohydrolase.